The sequence spans 475 residues: Aspartyl/glutamyl-tRNA(Asn/Gln) amidotransferase subunit B (475 aa).

Belongs to the GatB/GatE family. GatB subfamily. In terms of assembly, heterotrimer of A, B and C subunits.

It catalyses the reaction L-glutamyl-tRNA(Gln) + L-glutamine + ATP + H2O = L-glutaminyl-tRNA(Gln) + L-glutamate + ADP + phosphate + H(+). The catalysed reaction is L-aspartyl-tRNA(Asn) + L-glutamine + ATP + H2O = L-asparaginyl-tRNA(Asn) + L-glutamate + ADP + phosphate + 2 H(+). Allows the formation of correctly charged Asn-tRNA(Asn) or Gln-tRNA(Gln) through the transamidation of misacylated Asp-tRNA(Asn) or Glu-tRNA(Gln) in organisms which lack either or both of asparaginyl-tRNA or glutaminyl-tRNA synthetases. The reaction takes place in the presence of glutamine and ATP through an activated phospho-Asp-tRNA(Asn) or phospho-Glu-tRNA(Gln). This is Aspartyl/glutamyl-tRNA(Asn/Gln) amidotransferase subunit B from Chromobacterium violaceum (strain ATCC 12472 / DSM 30191 / JCM 1249 / CCUG 213 / NBRC 12614 / NCIMB 9131 / NCTC 9757 / MK).